Consider the following 264-residue polypeptide: Thiazole synthase (264 aa).

Catalysis depends on Lys106, which acts as the Schiff-base intermediate with DXP. 1-deoxy-D-xylulose 5-phosphate-binding positions include Gly167, 193–194, and 215–216; these read AG and NS.

This sequence belongs to the ThiG family. As to quaternary structure, homotetramer. Forms heterodimers with either ThiH or ThiS.

The protein resides in the cytoplasm. It carries out the reaction [ThiS sulfur-carrier protein]-C-terminal-Gly-aminoethanethioate + 2-iminoacetate + 1-deoxy-D-xylulose 5-phosphate = [ThiS sulfur-carrier protein]-C-terminal Gly-Gly + 2-[(2R,5Z)-2-carboxy-4-methylthiazol-5(2H)-ylidene]ethyl phosphate + 2 H2O + H(+). It functions in the pathway cofactor biosynthesis; thiamine diphosphate biosynthesis. Catalyzes the rearrangement of 1-deoxy-D-xylulose 5-phosphate (DXP) to produce the thiazole phosphate moiety of thiamine. Sulfur is provided by the thiocarboxylate moiety of the carrier protein ThiS. In vitro, sulfur can be provided by H(2)S. The polypeptide is Thiazole synthase (Azotobacter vinelandii (strain DJ / ATCC BAA-1303)).